Reading from the N-terminus, the 67-residue chain is DNA gyrase inhibitor YacG (67 aa).

Residues Cys9, Cys12, Cys28, and Cys32 each coordinate Zn(2+). The interval 48 to 67 (PVSPDAEDELFSEELPPRAH) is disordered.

Belongs to the DNA gyrase inhibitor YacG family. In terms of assembly, interacts with GyrB. Zn(2+) serves as cofactor.

In terms of biological role, inhibits all the catalytic activities of DNA gyrase by preventing its interaction with DNA. Acts by binding directly to the C-terminal domain of GyrB, which probably disrupts DNA binding by the gyrase. In Pseudomonas fluorescens (strain ATCC BAA-477 / NRRL B-23932 / Pf-5), this protein is DNA gyrase inhibitor YacG.